The sequence spans 65 residues: UPF0434 protein bsr0601 (65 aa).

Belongs to the UPF0434 family.

This Bradyrhizobium diazoefficiens (strain JCM 10833 / BCRC 13528 / IAM 13628 / NBRC 14792 / USDA 110) protein is UPF0434 protein bsr0601.